A 174-amino-acid polypeptide reads, in one-letter code: Large ribosomal subunit protein uL18 (174 aa).

It belongs to the universal ribosomal protein uL18 family. As to quaternary structure, part of the 50S ribosomal subunit. Contacts the 5S and 23S rRNAs.

This is one of the proteins that bind and probably mediate the attachment of the 5S RNA into the large ribosomal subunit, where it forms part of the central protuberance. This chain is Large ribosomal subunit protein uL18, found in Methanoregula boonei (strain DSM 21154 / JCM 14090 / 6A8).